Reading from the N-terminus, the 299-residue chain is Hydroxymethylglutaryl-CoA lyase YngG (299 aa).

The region spanning 7–274 (VTIKEVGPRD…KTNVKLEKLL (268 aa)) is the Pyruvate carboxyltransferase domain. Arg-15 provides a ligand contact to substrate. A divalent metal cation contacts are provided by Asp-16, His-207, and His-209. Cys-240 is an active-site residue. A divalent metal cation is bound at residue Asn-249.

It belongs to the HMG-CoA lyase family. As to quaternary structure, homodimer and homotetramer.

It catalyses the reaction (3S)-3-hydroxy-3-methylglutaryl-CoA = acetoacetate + acetyl-CoA. It functions in the pathway metabolic intermediate metabolism; (S)-3-hydroxy-3-methylglutaryl-CoA degradation; acetoacetate from (S)-3-hydroxy-3-methylglutaryl-CoA: step 1/1. In terms of biological role, involved in the catabolism of branched amino acids such as leucine. This chain is Hydroxymethylglutaryl-CoA lyase YngG (yngG), found in Bacillus subtilis (strain 168).